The primary structure comprises 633 residues: MKILDALLFPVIFIMFFIHLSIAQTDPELTIMTRLGQVQGTRLPVPDRSHVIAFLGIPFAEPPLGKMRFKPPEPKKPWNDVFDARDYPSACYQYVDTSYPGFSGTEMWNPNRMMSEDCLYLNVWVPATPRPHNLTVMVWIYGGGFYSGSSSLDVYDGRYLAHSEKVVVVSMNYRVSAFGFLALNGSAEAPGNVGLLDQRLALQWVQDNIHFFGGNPKQVTIFGESAGAASVGMHLLSPDSRPKFTRAILQSGVPNGPWRTVSFDEARRRAIKLGRLVGCPDGNDTDLIDCLRSKQPQDLIDQEWLVLPFSGLFRFSFVPVIDGVVFPDTPEAMLNSGNFKDTQILLGVNQNEGSYFLIYGAPGFSKDNESLITREDFLQGVKMSVPHANEIGLEAVILQYTDWMDEDNPIKNREAMDDIVGDHNVVCPLQHFAKMYAQYSILQGQTGTASQGNLGWGNSGSASNSGNSQVSVYLYMFDHRASNLVWPEWMGVIHGYEIEFVFGLPLEKRLNYTLEEEKLSRRMMKYWANFARTGNPNINVDGSIDSRRRWPVFTSTEQKHVGLNTDSLKVHKGLKSQFCALWNRFLPRLLNVTENIDDAERQWKAEFHRWSSYMMHWKNQFDHYSKQERCTNL.

The signal sequence occupies residues 1–23 (MKILDALLFPVIFIMFFIHLSIA). C91 and C118 are disulfide-bonded. N-linked (GlcNAc...) asparagine glycosylation is found at N133 and N184. S225 (acyl-ester intermediate) is an active-site residue. C279 and C290 are disulfide-bonded. The N-linked (GlcNAc...) asparagine glycan is linked to N283. The Charge relay system role is filled by E352. Residue N368 is glycosylated (N-linked (GlcNAc...) asparagine). A disulfide bridge links C427 with C579. Catalysis depends on H494, which acts as the Charge relay system. Residues N511 and N591 are each glycosylated (N-linked (GlcNAc...) asparagine).

The protein belongs to the type-B carboxylesterase/lipase family.

It is found in the synapse. The protein resides in the secreted. The protein localises to the cell membrane. It carries out the reaction acetylcholine + H2O = choline + acetate + H(+). Terminates signal transduction at the neuromuscular junction by rapid hydrolysis of the acetylcholine released into the synaptic cleft. This Electrophorus electricus (Electric eel) protein is Acetylcholinesterase (ache).